Reading from the N-terminus, the 639-residue chain is Sodium-dependent phosphate transport protein 2A (639 aa).

At 1-103 the chain is on the cytoplasmic side; it reads MISYGENLGG…LRRAGVTLLK (103 aa). A phosphoserine mark is found at Ser-14 and Ser-34. A helical transmembrane segment spans residues 104–125; it reads VPLMLSFLYLFVCSLDVLSSAF. Topologically, residues 126–145 are extracellular; the sequence is QLAGGKVAGDIFKDNAILSN. Residues 146-163 traverse the membrane as a helical segment; it reads PVAGLVVGILVTVLVQSS. Topologically, residues 164 to 165 are cytoplasmic; it reads ST. The helical transmembrane segment at 166 to 185 threads the bilayer; sequence STSIVVSMVSSGLLEVSSAI. The Extracellular portion of the chain corresponds to 186 to 347; that stretch reads PIIMGSNIGT…HIFVDTGLPD (162 aa). 2 cysteine pairs are disulfide-bonded: Cys-225/Cys-522 and Cys-306/Cys-336. N-linked (GlcNAc...) asparagine glycans are attached at residues Asn-298, Asn-323, and Asn-330. The chain crosses the membrane as a helical span at residues 348 to 370; that stretch reads LAVGLILLAGSLALLCTCLILLV. Topologically, residues 371–412 are cytoplasmic; that stretch reads KMLNSLLKGQVAKVIQKVINTDFPTPFTWATGYFAMVVGASM. Residues 413–436 traverse the membrane as a helical segment; sequence TFVVQSSSVFTSAITPLIGLGVIS. Over 437–466 the chain is Extracellular; it reads IERAYPLTLGSNIGTTTTAILAALASPREK. A helical transmembrane segment spans residues 467 to 487; sequence LSSAFQIALCHFFFNISGILL. Residues 488-513 are Cytoplasmic-facing; the sequence is WYPVPCTRLPIRMAKALGKRTAKYRW. Phosphothreonine; by PKC is present on Thr-508. A helical transmembrane segment spans residues 514 to 534; that stretch reads FAVLYLLLCFLLLPSMVFGLS. The Extracellular portion of the chain corresponds to 535–539; that stretch reads MAGWR. The chain crosses the membrane as a helical span at residues 540-561; it reads AMVGVGAPFGALLAFVVLVSAL. Residues 562–639 lie on the Cytoplasmic side of the membrane; that stretch reads QHRSPGCLPK…MPHHHDATRL (78 aa). Ser-607 carries the post-translational modification Phosphoserine. Residue Thr-623 is modified to Phosphothreonine. Ser-625 is modified (phosphoserine).

This sequence belongs to the SLC34A transporter family. Interacts via its C-terminal region with NHERF4. Interacts with NHERF1. Interacts with TMEM174; regulates SLC34A1 internalization by PTH and FGF23.

Its subcellular location is the apical cell membrane. It localises to the cell membrane. The catalysed reaction is 3 Na(+)(out) + phosphate(out) = 3 Na(+)(in) + phosphate(in). Functionally, involved in actively transporting phosphate into cells via Na(+) cotransport in the renal brush border membrane. The cotransport has a Na(+):Pi stoichiometry of 3:1 and is electrogenic. The protein is Sodium-dependent phosphate transport protein 2A of Ovis aries (Sheep).